Here is a 370-residue protein sequence, read N- to C-terminus: Dual-specificity RNA methyltransferase RlmN (370 aa).

The active-site Proton acceptor is Glu-93. A Radical SAM core domain is found at 99–337; that stretch reads EEGRGTLCVS…VTTVRKTRGD (239 aa). A disulfide bridge links Cys-106 with Cys-343. 3 residues coordinate [4Fe-4S] cluster: Cys-113, Cys-117, and Cys-120. Residues 167-168, Ser-199, 221-223, and Asn-300 each bind S-adenosyl-L-methionine; these read GE and SLH. Catalysis depends on Cys-343, which acts as the S-methylcysteine intermediate.

The protein belongs to the radical SAM superfamily. RlmN family. It depends on [4Fe-4S] cluster as a cofactor.

It localises to the cytoplasm. It catalyses the reaction adenosine(2503) in 23S rRNA + 2 reduced [2Fe-2S]-[ferredoxin] + 2 S-adenosyl-L-methionine = 2-methyladenosine(2503) in 23S rRNA + 5'-deoxyadenosine + L-methionine + 2 oxidized [2Fe-2S]-[ferredoxin] + S-adenosyl-L-homocysteine. The enzyme catalyses adenosine(37) in tRNA + 2 reduced [2Fe-2S]-[ferredoxin] + 2 S-adenosyl-L-methionine = 2-methyladenosine(37) in tRNA + 5'-deoxyadenosine + L-methionine + 2 oxidized [2Fe-2S]-[ferredoxin] + S-adenosyl-L-homocysteine. In terms of biological role, specifically methylates position 2 of adenine 2503 in 23S rRNA and position 2 of adenine 37 in tRNAs. m2A2503 modification seems to play a crucial role in the proofreading step occurring at the peptidyl transferase center and thus would serve to optimize ribosomal fidelity. The sequence is that of Dual-specificity RNA methyltransferase RlmN from Francisella tularensis subsp. holarctica (strain FTNF002-00 / FTA).